The sequence spans 381 residues: CCN family member 1 (381 aa).

The signal sequence occupies residues 1-24 (MSSRIARALALVVTLLHLTRLALS). One can recognise an IGFBP N-terminal domain in the interval 25 to 94 (TCPAACHCPL…TALKGICRAQ (70 aa)). Intrachain disulfides connect Cys26–Cys50, Cys30–Cys52, Cys32–Cys53, Cys39–Cys56, Cys64–Cys78, and Cys70–Cys91. Residues 98–164 (RPCEYNSRIY…GQCCEEWVCD (67 aa)) enclose the VWFC domain. Ser188 is subject to Phosphoserine. In terms of domain architecture, TSP type-1 spans 228–273 (KCIVQTTSWSQCSKTCGTGISTRVTNDNPECRLVKETRICEVRPCG). A heparin-binding region spans residues 279–315 (SLKKGKKCSKTKKSPEPVRFTYAGCLSVKKYRPKYCG). 5 cysteine pairs are disulfide-bonded: Cys286–Cys323, Cys303–Cys337, Cys314–Cys353, Cys317–Cys355, and Cys322–Cys359. Residues 286-360 (CSKTKKSPEP…QSCKCNYNCP (75 aa)) enclose the CTCK domain.

This sequence belongs to the CCN family. Interaction with integrins is heparin- and cell-type-dependent and promotes cell adhesion.

The protein resides in the secreted. Its function is as follows. Promotes cell proliferation, chemotaxis, angiogenesis and cell adhesion. Appears to play a role in wound healing by up-regulating, in skin fibroblasts, the expression of a number of genes involved in angiogenesis, inflammation and matrix remodeling including VEGA-A, VEGA-C, MMP1, MMP3, TIMP1, uPA, PAI-1 and integrins alpha-3 and alpha-5. CCN1-mediated gene regulation is dependent on heparin-binding. Down-regulates the expression of alpha-1 and alpha-2 subunits of collagen type-1. Promotes cell adhesion and adhesive signaling through integrin alpha-6/beta-1, cell migration through integrin alpha-1/beta-5 and cell proliferation through integrin alpha-v/beta-3. This chain is CCN family member 1 (CCN1), found in Pan troglodytes (Chimpanzee).